The primary structure comprises 456 residues: Cell adhesion molecule 1 (456 aa).

A signal peptide spans 1 to 47 (MASAVLPSGSQCAAAAAVAAAAAPPGLRLRLLLLLLSAAALIPTGDG). The 95-residue stretch at 48–142 (QNLFTKDVTV…PPQESYTTIT (95 aa)) folds into the Ig-like V-type domain. Topologically, residues 48–388 (QNLFTKDVTV…EEGTIGAVDH (341 aa)) are extracellular. A disulfide bond links Cys-67 and Cys-127. Asn-70, Asn-104, Asn-116, and Asn-168 each carry an N-linked (GlcNAc...) asparagine glycan. Ig-like C2-type domains lie at 147 to 241 (PRNL…RYLE) and 246 to 332 (PQVH…YMLY). 2 disulfides stabilise this stretch: Cys-169–Cys-223 and Cys-270–Cys-316. N-linked (GlcNAc...) asparagine glycans are attached at residues Asn-307 and Asn-311. A helical membrane pass occupies residues 389 to 409 (AVIGGVVAVVVFAMLCLLIIL). Residues 410 to 456 (GRYFARHKGTYFTHEAKGADDAADADTAIINAEGGQNNSEEKKEYFI) are Cytoplasmic-facing. Thr-436 bears the Phosphothreonine mark. A Phosphoserine modification is found at Ser-448.

The protein belongs to the nectin family. In terms of assembly, homodimer (via Ig-like V-type domain). Interacts with FARP1. Interacts (via Ig-like V-type domain) with CRTAM (via Ig-like V-type domain); the interaction competes with CRTAM homodimerization and CADM1 homodimerization. Interacts (via C-terminus) with EPB41L3/DAL1. The interaction with EPB41L3/DAL1 may act to anchor CADM1 to the actin cytoskeleton. Interacts (via C-terminus) with MPP2 (via PDZ domain). Interacts (via C-terminus) with MPP3 (via PDZ domain); this interaction connects CADM1 with DLG1. Interacts (via C-terminus) with PALS2 (via PDZ domain). N-glycosylated. In terms of processing, glycosylation at Asn-70 and Asn-104 promotes adhesive binding and synapse induction. As to expression, expressed dominantly in epithelial cells but not expressed in fibroblast cells (at protein level). Expressed in the T-cell area of lymph nodes, specifically in CD8+ and CD4- CD8- dendritic cells (at protein level). Expressed in CD8+ dendritic cells in the spleen (at protein level). Expressed in CD103+ dendritic cells in the small intestine lamina propria and mesenteric lymph nodes (at protein level). Expressed in brain, lung, kidney, testis, heart, spleen and liver, but not expressed in skeletal muscle.

The protein localises to the cell membrane. It localises to the synaptic cell membrane. Its function is as follows. Mediates homophilic cell-cell adhesion in a Ca(2+)-independent manner. Also mediates heterophilic cell-cell adhesion with CADM3 and NECTIN3 in a Ca(2+)-independent manner. Interaction with CRTAM promotes natural killer (NK) cell cytotoxicity and interferon-gamma (IFN-gamma) secretion by CD8+ T-cells in vitro as well as NK cell-mediated rejection of tumors expressing CADM1 in vivo. In mast cells, may mediate attachment to and promote communication with nerves. CADM1, together with MITF, is essential for development and survival of mast cells in vivo. By interacting with CRTAM and thus promoting the adhesion between CD8+ T-cells and CD8+ dendritic cells, regulates the retention of activated CD8+ T-cell within the draining lymph node. Required for the intestinal retention of intraepithelial CD4+ CD8+ T-cells and, to a lesser extent, intraepithelial and lamina propria CD8+ T-cells and CD4+ T-cells. Interaction with CRTAM promotes the adhesion to gut-associated CD103+ dendritic cells, which may facilitate the expression of gut-homing and adhesion molecules on T-cells and the conversion of CD4+ T-cells into CD4+ CD8+ T-cells. Acts as a synaptic cell adhesion molecule and plays a role in the formation of dendritic spines and in synapse assembly. May be involved in neuronal migration, axon growth, pathfinding, and fasciculation on the axons of differentiating neurons. May play diverse roles in the spermatogenesis including in the adhesion of spermatocytes and spermatids to Sertoli cells and for their normal differentiation into mature spermatozoa. This Mus musculus (Mouse) protein is Cell adhesion molecule 1.